The following is a 254-amino-acid chain: Alcohol dehydrogenase 1 (254 aa).

An NAD(+)-binding site is contributed by 10-33 (FVAGLGGIGLDTSREIVKSGPKNL). Residue Ser-138 participates in substrate binding. The Proton acceptor role is filled by Tyr-151.

This sequence belongs to the short-chain dehydrogenases/reductases (SDR) family. In terms of assembly, homodimer.

The enzyme catalyses a primary alcohol + NAD(+) = an aldehyde + NADH + H(+). It catalyses the reaction a secondary alcohol + NAD(+) = a ketone + NADH + H(+). In Drosophila montana (Fruit fly), this protein is Alcohol dehydrogenase 1 (Adh1).